A 379-amino-acid polypeptide reads, in one-letter code: Cathepsin B-like protease 1 (379 aa).

Residues 1–30 (MADSCCIRLHLLASVFLLLFSSFNLQGIAA) form the signal peptide. Positions 31 to 102 (ENLSKQKLTS…PIVRHDLSLK (72 aa)) are cleaved as a propeptide — activation peptide. Residues Asn-32 and Asn-69 are each glycosylated (N-linked (GlcNAc...) asparagine). Intrachain disulfides connect Cys-116–Cys-165, Cys-148–Cys-191, Cys-182–Cys-236, Cys-183–Cys-187, Cys-213–Cys-240, and Cys-222–Cys-227. Cys-151 is a catalytic residue. Asn-171 is a glycosylation site (N-linked (GlcNAc...) asparagine). Catalysis depends on residues His-306 and Asn-327. Residue Asn-330 is glycosylated (N-linked (GlcNAc...) asparagine). Residues 363–379 (NVFKGITTSDDLLVSSV) constitute a propeptide, removed in mature form.

It belongs to the peptidase C1 family.

Functionally, thiol protease that plays a central role in plant programmed cell death (PCD). In addition to its role in protein degradation, may cleave and/or degrade a number of target proteins, activating signaling towards PCD. Contributes to the increase of caspase-3-like activity after UV-C-induced PCD and is required for abiotic stress-induced PCD. Functions redundantly with CATHB2 and CATHB3 in basal defense and distinct forms of plant programmed cell death (PCD). Participates in the establishment of basal resistance against the bacterial pathogen Pseudomonase syringae pv. tomato DC3000. Required for full levels of PCD during resistance (R) gene-mediated hypersensitive response (HR). Involved in the regulation of senescence, a developmental form of PCD in plants. This is Cathepsin B-like protease 1 from Arabidopsis thaliana (Mouse-ear cress).